The sequence spans 257 residues: Phosphatidylglycerol--prolipoprotein diacylglyceryl transferase (257 aa).

Transmembrane regions (helical) follow at residues 13-33, 49-69, 88-108, 123-143, 152-172, 185-202, and 223-243; these read IGPI…AIGG, FLLN…RLMF, IYEG…AGLY, FAVL…IFNQ, FAFG…ILLI, GYQF…RGLI, and IGFF…AYWM. Residue Arg-136 coordinates a 1,2-diacyl-sn-glycero-3-phospho-(1'-sn-glycerol).

This sequence belongs to the Lgt family.

The protein localises to the cell membrane. It carries out the reaction L-cysteinyl-[prolipoprotein] + a 1,2-diacyl-sn-glycero-3-phospho-(1'-sn-glycerol) = an S-1,2-diacyl-sn-glyceryl-L-cysteinyl-[prolipoprotein] + sn-glycerol 1-phosphate + H(+). It functions in the pathway protein modification; lipoprotein biosynthesis (diacylglyceryl transfer). Its function is as follows. Catalyzes the transfer of the diacylglyceryl group from phosphatidylglycerol to the sulfhydryl group of the N-terminal cysteine of a prolipoprotein, the first step in the formation of mature lipoproteins. This chain is Phosphatidylglycerol--prolipoprotein diacylglyceryl transferase, found in Thermoanaerobacter pseudethanolicus (strain ATCC 33223 / 39E) (Clostridium thermohydrosulfuricum).